Consider the following 278-residue polypeptide: Transmembrane protein 41B (278 aa).

Residues 1–31 (MQVHERSHTGGHTCQCNHGSEKKAPATGKVH) are disordered. The next 6 helical transmembrane spans lie at 39-59 (MSLLILVSIFLCAASIMFLVY), 96-116 (FYVEVLVAYFTTYIFLQTFAI), 132-154 (FPLALFLVCLCSGLGASFSYLLS), 184-204 (LINYIIFLRITPFLPNWFINI), 212-232 (PLKVFFLGTFIGVAPPSFVAI), and 249-269 (SWNSVIILMVLAVLSILPAIF). The tract at residues 127–238 (GFLYPFPLAL…FVAIKAGTTL (112 aa)) is VTT domain; required for its function in autophagy.

This sequence belongs to the TMEM41 family.

The protein localises to the endoplasmic reticulum membrane. It is found in the endomembrane system. The catalysed reaction is a 1,2-diacyl-sn-glycero-3-phospho-L-serine(in) = a 1,2-diacyl-sn-glycero-3-phospho-L-serine(out). It catalyses the reaction cholesterol(in) = cholesterol(out). The enzyme catalyses a 1,2-diacyl-sn-glycero-3-phosphocholine(in) = a 1,2-diacyl-sn-glycero-3-phosphocholine(out). It carries out the reaction a 1,2-diacyl-sn-glycero-3-phosphoethanolamine(in) = a 1,2-diacyl-sn-glycero-3-phosphoethanolamine(out). Functionally, phospholipid scramblase involved in lipid homeostasis and membrane dynamics processes. Has phospholipid scramblase activity toward cholesterol and phosphatidylserine, as well as phosphatidylethanolamine and phosphatidylcholine. Required for autophagosome formation: participates in early stages of autophagosome biogenesis at the endoplasmic reticulum (ER) membrane by reequilibrating the leaflets of the ER as lipids are extracted by atg2 (atg2a or atg2b) to mediate autophagosome assembly. In addition to autophagy, involved in other processes in which phospholipid scramblase activity is required. Required for normal motor neuron development. This Xenopus tropicalis (Western clawed frog) protein is Transmembrane protein 41B.